Reading from the N-terminus, the 207-residue chain is Pyrrolidone-carboxylate peptidase (207 aa).

Active-site residues include glutamate 80, cysteine 143, and histidine 167.

This sequence belongs to the peptidase C15 family. Homotetramer.

The protein localises to the cytoplasm. The enzyme catalyses Release of an N-terminal pyroglutamyl group from a polypeptide, the second amino acid generally not being Pro.. In terms of biological role, removes 5-oxoproline from various penultimate amino acid residues except L-proline. This is Pyrrolidone-carboxylate peptidase from Coprothermobacter proteolyticus (strain ATCC 35245 / DSM 5265 / OCM 4 / BT).